Here is a 171-residue protein sequence, read N- to C-terminus: Der GTPase-activating protein YihI (171 aa).

2 disordered regions span residues 1–99 (MKKP…QAEL) and 145–171 (LSYD…RGGN). A compositionally biased stretch (basic and acidic residues) spans 20-30 (TREELNQEARD). The segment covering 31–40 (RKRLKKHRGH) has biased composition (basic residues). A compositionally biased stretch (acidic residues) spans 147 to 160 (YDDDEEDDEEDEKQ).

This sequence belongs to the YihI family. In terms of assembly, interacts with Der.

Its function is as follows. A GTPase-activating protein (GAP) that modifies Der/EngA GTPase function. May play a role in ribosome biogenesis. This is Der GTPase-activating protein YihI from Salmonella agona (strain SL483).